We begin with the raw amino-acid sequence, 110 residues long: Protein OPG154 (110 aa).

A coiled-coil region spans residues 36 to 101 (VKADEDDNEE…AMISLAKKID (66 aa)).

This sequence belongs to the orthopoxvirus OPG154 protein family. As to quaternary structure, homohexamers, covalently linked. Interacts with OPG144 and OPG153.

Its subcellular location is the virion. Structural protein involved in the envelopment of mature virion (MV) to form the wrapped virion (WV). The wrapping consists of the addition of Golgi membranes to the mature virion. Participates in mature virion (MV) movement within the infected cell. May play an indirect role in MV-cell fusion. In Vaccinia virus (strain Western Reserve) (VACV), this protein is Protein OPG154 (OPG154).